The sequence spans 505 residues: UDP-N-acetylmuramate--L-alanine ligase (505 aa).

An ATP-binding site is contributed by 164–170; it reads GTHGKTT.

It belongs to the MurCDEF family.

Its subcellular location is the cytoplasm. The enzyme catalyses UDP-N-acetyl-alpha-D-muramate + L-alanine + ATP = UDP-N-acetyl-alpha-D-muramoyl-L-alanine + ADP + phosphate + H(+). The protein operates within cell wall biogenesis; peptidoglycan biosynthesis. Its function is as follows. Cell wall formation. In Synechocystis sp. (strain ATCC 27184 / PCC 6803 / Kazusa), this protein is UDP-N-acetylmuramate--L-alanine ligase.